The chain runs to 304 residues: Methionyl-tRNA formyltransferase (304 aa).

107 to 110 (SLLP) lines the (6S)-5,6,7,8-tetrahydrofolate pocket.

It belongs to the Fmt family.

The catalysed reaction is L-methionyl-tRNA(fMet) + (6R)-10-formyltetrahydrofolate = N-formyl-L-methionyl-tRNA(fMet) + (6S)-5,6,7,8-tetrahydrofolate + H(+). Its function is as follows. Attaches a formyl group to the free amino group of methionyl-tRNA(fMet). The formyl group appears to play a dual role in the initiator identity of N-formylmethionyl-tRNA by promoting its recognition by IF2 and preventing the misappropriation of this tRNA by the elongation apparatus. In Coprothermobacter proteolyticus (strain ATCC 35245 / DSM 5265 / OCM 4 / BT), this protein is Methionyl-tRNA formyltransferase.